Reading from the N-terminus, the 267-residue chain is Thymidylate synthase (267 aa).

Arg-24 lines the dUMP pocket. His-54 provides a ligand contact to (6R)-5,10-methylene-5,6,7,8-tetrahydrofolate. 129–130 (RR) is a dUMP binding site. Cys-149 (nucleophile) is an active-site residue. DUMP contacts are provided by residues 169–172 (RSAD), Asn-180, and 210–212 (HIY). Residue Asp-172 participates in (6R)-5,10-methylene-5,6,7,8-tetrahydrofolate binding. (6R)-5,10-methylene-5,6,7,8-tetrahydrofolate is bound at residue Ala-266.

This sequence belongs to the thymidylate synthase family. Bacterial-type ThyA subfamily. As to quaternary structure, homodimer.

The protein localises to the cytoplasm. The catalysed reaction is dUMP + (6R)-5,10-methylene-5,6,7,8-tetrahydrofolate = 7,8-dihydrofolate + dTMP. The protein operates within pyrimidine metabolism; dTTP biosynthesis. Functionally, catalyzes the reductive methylation of 2'-deoxyuridine-5'-monophosphate (dUMP) to 2'-deoxythymidine-5'-monophosphate (dTMP) while utilizing 5,10-methylenetetrahydrofolate (mTHF) as the methyl donor and reductant in the reaction, yielding dihydrofolate (DHF) as a by-product. This enzymatic reaction provides an intracellular de novo source of dTMP, an essential precursor for DNA biosynthesis. This Arthrobacter sp. (strain FB24) protein is Thymidylate synthase.